Consider the following 254-residue polypeptide: Dihydroorotate dehydrogenase B (NAD(+)), electron transfer subunit (254 aa).

The region spanning 1–99 (MLQTEMKVIQ…LGPLGKGFDI (99 aa)) is the FAD-binding FR-type domain. Residues 50–53 (RPIS), 67–69 (LYR), and 74–75 (GT) each bind FAD. Residues cysteine 218, cysteine 223, cysteine 226, and cysteine 241 each coordinate [2Fe-2S] cluster.

The protein belongs to the PyrK family. In terms of assembly, heterotetramer of 2 PyrK and 2 PyrD type B subunits. The cofactor is [2Fe-2S] cluster. FAD serves as cofactor.

Its pathway is pyrimidine metabolism; UMP biosynthesis via de novo pathway; orotate from (S)-dihydroorotate (NAD(+) route): step 1/1. In terms of biological role, responsible for channeling the electrons from the oxidation of dihydroorotate from the FMN redox center in the PyrD type B subunit to the ultimate electron acceptor NAD(+). The sequence is that of Dihydroorotate dehydrogenase B (NAD(+)), electron transfer subunit from Listeria monocytogenes serotype 4b (strain F2365).